The following is a 161-amino-acid chain: Peptidyl-prolyl cis-trans isomerase (161 aa).

The region spanning 6–160 (FFDIKAGDER…KKIIIEDCGE (155 aa)) is the PPIase cyclophilin-type domain.

Belongs to the cyclophilin-type PPIase family. PPIase A subfamily. In terms of tissue distribution, found mainly in the tegument, gut epithelium, and muscle layers. Also found in the interior of the parasite.

The enzyme catalyses [protein]-peptidylproline (omega=180) = [protein]-peptidylproline (omega=0). Binds cyclosporin A (CsA). CsA mediates some of its effects via an inhibitory action on PPIase. In terms of biological role, PPIases accelerate the folding of proteins. It catalyzes the cis-trans isomerization of proline imidic peptide bonds in oligopeptides. The sequence is that of Peptidyl-prolyl cis-trans isomerase from Schistosoma mansoni (Blood fluke).